The sequence spans 149 residues: uncharacterized protein (149 aa).

Residues 111–140 (HKALEKATELIENEEELLKREGIKRENLKF) adopt a coiled-coil conformation.

This is an uncharacterized protein from Aquifex aeolicus (strain VF5).